Reading from the N-terminus, the 149-residue chain is Angiogenin (149 aa).

The signal sequence occupies residues 1–24; the sequence is MVMGLGPLVLIFVLGLGVTPPTLA. Residue Gln25 is modified to Pyrrolidone carboxylic acid. Residue His37 is the Proton acceptor of the active site. Residue Arg45 participates in tRNA binding. Disulfide bonds link Cys50–Cys105, Cys63–Cys116, and Cys81–Cys131. The Nucleolar localization signal motif lies at 55–59; it reads KRRDL. The tRNA site is built by Cys105 and Ile127. His138 serves as the catalytic Proton donor.

Belongs to the pancreatic ribonuclease family. As to quaternary structure, homodimer. Interacts with RNH1; inhibiting ANG ribonuclease activity. Interacts with PCNA.

The protein resides in the secreted. It is found in the nucleus. Its subcellular location is the nucleolus. The protein localises to the cytoplasm. It localises to the stress granule. With respect to regulation, has weak tRNA ribonuclease activity by itself due to partial autoinhibition by its C-terminus, which folds into a short alpha-helix that partially occludes the substrate-binding site. In absence of stress, the ribonuclease activity is inhibited by RNH1 in the cytoplasm. In response to stress, dissociates from RNH1 in the cytoplasm and associates with cytoplasmic ribosomes with vacant A-sites: ribosomes directly activate the tRNA ribonuclease activity of ANG by refolding the C-terminal alpha-helix. In response to stress, the angiogenic activity of ANG is inhibited by RNH1 in the nucleus. Secreted ribonuclease that can either promote or restrict cell proliferation of target cells, depending on the context. Endocytosed in target cells via its receptor PLXNB2 and translocates to the cytoplasm or nucleus. Under stress conditions, localizes to the cytoplasm and promotes the assembly of stress granules (SGs): specifically cleaves a subset of tRNAs within anticodon loops to produce tRNA-derived stress-induced fragments (tiRNAs), resulting in translation repression and inhibition of cell proliferation. tiRNas also prevent formation of apoptosome, thereby promoting cell survival. Preferentially cleaves RNAs between a pyrimidine and an adenosine residue, suggesting that it cleaves the anticodon loop of tRNA(Ala) (32-UUAGCAU-38) after positions 33 and 36. Cleaves a subset of tRNAs, including tRNA(Ala), tRNA(Glu), tRNA(Gly), tRNA(Lys), tRNA(Val), tRNA(His), tRNA(Asp) and tRNA(Sec). Under growth conditions and in differentiated cells, translocates to the nucleus and stimulates ribosomal RNA (rRNA) transcription, including that containing the initiation site sequences of 45S rRNA, thereby promoting cell growth and proliferation. Angiogenin induces vascularization of normal and malignant tissues via its ability to promote rRNA transcription. Involved in hematopoietic stem and progenitor cell (HSPC) growth and survival by promoting rRNA transcription in growth conditions and inhibiting translation in response to stress, respectively. Mediates the crosstalk between myeloid and intestinal epithelial cells to protect the intestinal epithelial barrier integrity: secreted by myeloid cells and promotes intestinal epithelial cells proliferation and survival. Also mediates osteoclast-endothelial cell crosstalk in growing bone: produced by osteoclasts and protects the neighboring vascular cells against senescence by promoting rRNA transcription. This chain is Angiogenin (ANG), found in Oryctolagus cuniculus (Rabbit).